Reading from the N-terminus, the 675-residue chain is Pesticidal crystal protein Cry10Aa (675 aa).

The protein belongs to the delta endotoxin family.

Its function is as follows. Promotes colloidosmotic lysis by binding to the midgut epithelial cells of mosquitos. Active on Aedes aegypti. The polypeptide is Pesticidal crystal protein Cry10Aa (cry10Aa) (Bacillus thuringiensis subsp. israelensis).